Reading from the N-terminus, the 228-residue chain is 5'-methylthioadenosine/S-adenosylhomocysteine nucleosidase (228 aa).

Catalysis depends on glutamate 11, which acts as the Proton acceptor. Residues glycine 77, isoleucine 151, and 172–173 (ME) contribute to the substrate site. Aspartate 196 (proton donor) is an active-site residue.

Belongs to the PNP/UDP phosphorylase family. MtnN subfamily.

It carries out the reaction S-adenosyl-L-homocysteine + H2O = S-(5-deoxy-D-ribos-5-yl)-L-homocysteine + adenine. The catalysed reaction is S-methyl-5'-thioadenosine + H2O = 5-(methylsulfanyl)-D-ribose + adenine. The enzyme catalyses 5'-deoxyadenosine + H2O = 5-deoxy-D-ribose + adenine. Its pathway is amino-acid biosynthesis; L-methionine biosynthesis via salvage pathway; S-methyl-5-thio-alpha-D-ribose 1-phosphate from S-methyl-5'-thioadenosine (hydrolase route): step 1/2. Catalyzes the irreversible cleavage of the glycosidic bond in both 5'-methylthioadenosine (MTA) and S-adenosylhomocysteine (SAH/AdoHcy) to adenine and the corresponding thioribose, 5'-methylthioribose and S-ribosylhomocysteine, respectively. Also cleaves 5'-deoxyadenosine, a toxic by-product of radical S-adenosylmethionine (SAM) enzymes, into 5-deoxyribose and adenine. This chain is 5'-methylthioadenosine/S-adenosylhomocysteine nucleosidase, found in Staphylococcus aureus (strain MRSA252).